The following is a 180-amino-acid chain: Insulin-like growth factor 2 (180 aa).

The N-terminal stretch at 1–24 (MGIPMGKSMLVLLTFLAFASCCIA) is a signal peptide. A b region spans residues 25 to 52 (AYRPSETLCGGELVDTLQFVCGDRGFYF). Intrachain disulfides connect Cys33–Cys71, Cys45–Cys84, and Cys70–Cys75. Positions 53–64 (SRPASRVSRRSR) are c. Residues 65–85 (GIVEECCFRSCDLALLETYCA) are a. The tract at residues 86 to 91 (TPAKSE) is d. A propeptide spans 92-180 (RDVSTPPTVL…APPEMASNRK (89 aa)) (e peptide). O-linked (GalNAc...) threonine glycosylation is found at Thr96, Thr99, and Thr163. The tract at residues 161–180 (LPTQDPAHGGAPPEMASNRK) is disordered.

It belongs to the insulin family. As to quaternary structure, interacts with MYORG; this interaction is required for IGF2 secretion. Interacts with integrins ITGAV:ITGB3 and ITGA6:ITGB4; integrin-binding is required for IGF2 signaling. Interacts with IGFBP2. Post-translationally, O-glycosylated with core 1 or possibly core 8 glycans. Thr-96 is a minor glycosylation site compared to Thr-99. In terms of processing, proteolytically processed by PCSK4, proIGF2 is cleaved at Arg-128 and Arg-92 to generate big-IGF2 and mature IGF2. In terms of tissue distribution, expressed in heart, placenta, lung, liver, muscle, kidney, tongue, limb, eye and pancreas.

It is found in the secreted. Its function is as follows. The insulin-like growth factors possess growth-promoting activity. Major fetal growth hormone in mammals. Plays a key role in regulating fetoplacental development. IGF2 is influenced by placental lactogen. Also involved in tissue differentiation. In adults, involved in glucose metabolism in adipose tissue, skeletal muscle and liver. Acts as a ligand for integrin which is required for IGF2 signaling. Positively regulates myogenic transcription factor MYOD1 function by facilitating the recruitment of transcriptional coactivators, thereby controlling muscle terminal differentiation. Inhibits myoblast differentiation and modulates metabolism via increasing the mitochondrial respiration rate. In terms of biological role, preptin undergoes glucose-mediated co-secretion with insulin, and acts as a physiological amplifier of glucose-mediated insulin secretion. Exhibits osteogenic properties by increasing osteoblast mitogenic activity through phosphoactivation of MAPK1 and MAPK3. The polypeptide is Insulin-like growth factor 2 (Homo sapiens (Human)).